The following is a 483-amino-acid chain: Cobyric acid synthase (483 aa).

In terms of domain architecture, GATase cobBQ-type spans 248–435; the sequence is LLKVVVPVLP…LHGLFETPAA (188 aa). Cys-329 serves as the catalytic Nucleophile. His-427 is an active-site residue.

It belongs to the CobB/CobQ family. CobQ subfamily.

The protein operates within cofactor biosynthesis; adenosylcobalamin biosynthesis. Functionally, catalyzes amidations at positions B, D, E, and G on adenosylcobyrinic A,C-diamide. NH(2) groups are provided by glutamine, and one molecule of ATP is hydrogenolyzed for each amidation. This is Cobyric acid synthase from Pseudomonas fluorescens (strain ATCC BAA-477 / NRRL B-23932 / Pf-5).